The sequence spans 24 residues: Ascaphin-4 (24 aa).

As to expression, expressed by the skin glands.

Its subcellular location is the secreted. Its function is as follows. Antimicrobial peptide that shows higher potency against Gram-negative bacteria than against Gram-positive bacteria. Has a very week hemolytic activity. The sequence is that of Ascaphin-4 from Ascaphus truei (Coastal tailed frog).